The chain runs to 277 residues: 3-methyl-2-oxobutanoate hydroxymethyltransferase (277 aa).

Residues D43 and D82 each coordinate Mg(2+). Residues 43–44, D82, and K112 each bind 3-methyl-2-oxobutanoate; that span reads DS. Residue E114 participates in Mg(2+) binding. E181 functions as the Proton acceptor in the catalytic mechanism.

Belongs to the PanB family. As to quaternary structure, homodecamer; pentamer of dimers. It depends on Mg(2+) as a cofactor.

The protein resides in the cytoplasm. The enzyme catalyses 3-methyl-2-oxobutanoate + (6R)-5,10-methylene-5,6,7,8-tetrahydrofolate + H2O = 2-dehydropantoate + (6S)-5,6,7,8-tetrahydrofolate. The protein operates within cofactor biosynthesis; (R)-pantothenate biosynthesis; (R)-pantoate from 3-methyl-2-oxobutanoate: step 1/2. Catalyzes the reversible reaction in which hydroxymethyl group from 5,10-methylenetetrahydrofolate is transferred onto alpha-ketoisovalerate to form ketopantoate. The protein is 3-methyl-2-oxobutanoate hydroxymethyltransferase of Listeria innocua serovar 6a (strain ATCC BAA-680 / CLIP 11262).